The sequence spans 349 residues: Dihydroorotase (349 aa).

Positions 17 and 19 each coordinate Zn(2+). Substrate-binding positions include His-19 to Arg-21 and Asn-45. Zn(2+)-binding residues include Lys-105, His-142, and His-180. Position 105 is an N6-carboxylysine (Lys-105). His-142 lines the substrate pocket. Residue Leu-225 coordinates substrate. Residue Asp-253 participates in Zn(2+) binding. Residue Asp-253 is part of the active site. Substrate-binding residues include His-257 and Ala-269.

This sequence belongs to the metallo-dependent hydrolases superfamily. DHOase family. Class II DHOase subfamily. In terms of assembly, homodimer. It depends on Zn(2+) as a cofactor.

It catalyses the reaction (S)-dihydroorotate + H2O = N-carbamoyl-L-aspartate + H(+). It functions in the pathway pyrimidine metabolism; UMP biosynthesis via de novo pathway; (S)-dihydroorotate from bicarbonate: step 3/3. Functionally, catalyzes the reversible cyclization of carbamoyl aspartate to dihydroorotate. The chain is Dihydroorotase from Nitrosomonas europaea (strain ATCC 19718 / CIP 103999 / KCTC 2705 / NBRC 14298).